Here is a 278-residue protein sequence, read N- to C-terminus: Proteolipid protein DM beta (278 aa).

Transmembrane regions (helical) follow at residues 30–46 (LIAT…FCGC), 84–100 (VIYG…ILLM), 130–146 (FIML…GVTA), and 213–229 (LFIV…IAMV).

Belongs to the myelin proteolipid protein family.

The protein localises to the membrane. The polypeptide is Proteolipid protein DM beta (Squalus acanthias (Spiny dogfish)).